Here is a 236-residue protein sequence, read N- to C-terminus: E3 ubiquitin-protein ligase ATL41 (236 aa).

A helical membrane pass occupies residues 31-51 (IMLAAVASLSGVILIVFALHL). The RING-type; atypical zinc-finger motif lies at 108-150 (CAVCLSVLKEQDKARELPNCKHIFHVDCVDTWLTTCSTCPVCR).

The protein belongs to the RING-type zinc finger family. ATL subfamily.

It localises to the membrane. The catalysed reaction is S-ubiquitinyl-[E2 ubiquitin-conjugating enzyme]-L-cysteine + [acceptor protein]-L-lysine = [E2 ubiquitin-conjugating enzyme]-L-cysteine + N(6)-ubiquitinyl-[acceptor protein]-L-lysine.. It participates in protein modification; protein ubiquitination. E3 ubiquitin-protein ligase able to catalyze polyubiquitination with ubiquitin-conjugating enzyme E2 UBC8, UBC10, UBC11, UBC28, UBC29, UBC30, UBC35 and UBC36 in vitro. This Arabidopsis thaliana (Mouse-ear cress) protein is E3 ubiquitin-protein ligase ATL41 (ATL41).